The primary structure comprises 273 residues: Dermonecrotic toxin LapSicTox-alphaII1 (273 aa).

Residue His5 is part of the active site. 2 residues coordinate Mg(2+): Glu25 and Asp27. Residue His41 is the Nucleophile of the active site. 2 disulfide bridges follow: Cys45–Cys51 and Cys47–Cys191. Residue Asp85 participates in Mg(2+) binding.

The protein belongs to the arthropod phospholipase D family. Class II subfamily. The cofactor is Mg(2+). As to expression, expressed by the venom gland.

The protein resides in the secreted. It catalyses the reaction an N-(acyl)-sphingosylphosphocholine = an N-(acyl)-sphingosyl-1,3-cyclic phosphate + choline. It carries out the reaction an N-(acyl)-sphingosylphosphoethanolamine = an N-(acyl)-sphingosyl-1,3-cyclic phosphate + ethanolamine. The catalysed reaction is a 1-acyl-sn-glycero-3-phosphocholine = a 1-acyl-sn-glycero-2,3-cyclic phosphate + choline. The enzyme catalyses a 1-acyl-sn-glycero-3-phosphoethanolamine = a 1-acyl-sn-glycero-2,3-cyclic phosphate + ethanolamine. In terms of biological role, dermonecrotic toxins cleave the phosphodiester linkage between the phosphate and headgroup of certain phospholipids (sphingolipid and lysolipid substrates), forming an alcohol (often choline) and a cyclic phosphate. This toxin acts on sphingomyelin (SM). It may also act on ceramide phosphoethanolamine (CPE), lysophosphatidylcholine (LPC) and lysophosphatidylethanolamine (LPE), but not on lysophosphatidylserine (LPS), and lysophosphatidylglycerol (LPG). It acts by transphosphatidylation, releasing exclusively cyclic phosphate products as second products. Induces dermonecrosis, hemolysis, increased vascular permeability, edema, inflammatory response, and platelet aggregation. The polypeptide is Dermonecrotic toxin LapSicTox-alphaII1 (Loxosceles apachea (Apache recluse spider)).